Reading from the N-terminus, the 419-residue chain is UDP-N-acetylglucosamine 1-carboxyvinyltransferase (419 aa).

Lys-22–Asn-23 serves as a coordination point for phosphoenolpyruvate. A UDP-N-acetyl-alpha-D-glucosamine-binding site is contributed by Arg-95. Cys-119 functions as the Proton donor in the catalytic mechanism. Cys-119 is subject to 2-(S-cysteinyl)pyruvic acid O-phosphothioketal. UDP-N-acetyl-alpha-D-glucosamine-binding positions include Lys-164–Val-167, Asp-308, and Ile-330.

The protein belongs to the EPSP synthase family. MurA subfamily.

It is found in the cytoplasm. The enzyme catalyses phosphoenolpyruvate + UDP-N-acetyl-alpha-D-glucosamine = UDP-N-acetyl-3-O-(1-carboxyvinyl)-alpha-D-glucosamine + phosphate. The protein operates within cell wall biogenesis; peptidoglycan biosynthesis. Its function is as follows. Cell wall formation. Adds enolpyruvyl to UDP-N-acetylglucosamine. In Rickettsia massiliae (strain Mtu5), this protein is UDP-N-acetylglucosamine 1-carboxyvinyltransferase.